Here is a 515-residue protein sequence, read N- to C-terminus: 2-isopropylmalate synthase (515 aa).

A Pyruvate carboxyltransferase domain is found at 4–266 (IKFFDTTLRD…ETRLNLQEIK (263 aa)). Mn(2+)-binding residues include Asp13, His201, His203, and Asn237. The interval 391-515 (QLSSIQVQYG…RAENEKVTTP (125 aa)) is regulatory domain.

It belongs to the alpha-IPM synthase/homocitrate synthase family. LeuA type 1 subfamily. As to quaternary structure, homodimer. Mn(2+) serves as cofactor.

It localises to the cytoplasm. It catalyses the reaction 3-methyl-2-oxobutanoate + acetyl-CoA + H2O = (2S)-2-isopropylmalate + CoA + H(+). It functions in the pathway amino-acid biosynthesis; L-leucine biosynthesis; L-leucine from 3-methyl-2-oxobutanoate: step 1/4. Catalyzes the condensation of the acetyl group of acetyl-CoA with 3-methyl-2-oxobutanoate (2-ketoisovalerate) to form 3-carboxy-3-hydroxy-4-methylpentanoate (2-isopropylmalate). This is 2-isopropylmalate synthase from Geobacillus thermodenitrificans (strain NG80-2).